Reading from the N-terminus, the 23-residue chain is Cardioactive peptide CAP23 (23 aa).

Residues Cys7 and Cys19 are joined by a disulfide bond.

Belongs to the GBP/PSP1/paralytic peptide family.

Its function is as follows. Has excitatory effects on a semi-isolated heart from larval Manduca sexta, causing an inotropic effect at low concentrations of peptide and chronotropic and inotropic effects at high doses. The protein is Cardioactive peptide CAP23 of Spodoptera eridania (Southern armyworm).